The following is a 184-amino-acid chain: Photosystem I assembly protein Ycf4 (184 aa).

2 consecutive transmembrane segments (helical) span residues 24–44 and 57–77; these read WAFI…SSYI and IIFF…LFIS.

Belongs to the Ycf4 family.

It is found in the plastid. The protein resides in the chloroplast thylakoid membrane. In terms of biological role, seems to be required for the assembly of the photosystem I complex. The protein is Photosystem I assembly protein Ycf4 of Buxus microphylla (Littleleaf boxwood).